The primary structure comprises 126 residues: Small ribosomal subunit protein eS6 (126 aa).

Belongs to the eukaryotic ribosomal protein eS6 family.

The protein is Small ribosomal subunit protein eS6 of Nanoarchaeum equitans (strain Kin4-M).